A 291-amino-acid chain; its full sequence is tRNA U34 carboxymethyltransferase (291 aa).

Residues lysine 61, tryptophan 75, lysine 80, glycine 100, 122–124 (DPS), 149–150 (VE), tyrosine 169, and arginine 284 each bind carboxy-S-adenosyl-L-methionine.

It belongs to the class I-like SAM-binding methyltransferase superfamily. CmoB family. Homotetramer.

The enzyme catalyses carboxy-S-adenosyl-L-methionine + 5-hydroxyuridine(34) in tRNA = 5-carboxymethoxyuridine(34) in tRNA + S-adenosyl-L-homocysteine + H(+). Functionally, catalyzes carboxymethyl transfer from carboxy-S-adenosyl-L-methionine (Cx-SAM) to 5-hydroxyuridine (ho5U) to form 5-carboxymethoxyuridine (cmo5U) at position 34 in tRNAs. The chain is tRNA U34 carboxymethyltransferase from Campylobacter jejuni subsp. doylei (strain ATCC BAA-1458 / RM4099 / 269.97).